Consider the following 408-residue polypeptide: LL-diaminopimelate aminotransferase (408 aa).

Residues Tyr-15 and Gly-42 each coordinate substrate. Pyridoxal 5'-phosphate is bound by residues Tyr-72, 108 to 109, Tyr-132, Asn-187, Tyr-218, and 246 to 248; these read SK and SFS. Lys-109, Tyr-132, and Asn-187 together coordinate substrate. Lys-249 is modified (N6-(pyridoxal phosphate)lysine). Pyridoxal 5'-phosphate is bound by residues Arg-257 and Asn-292. Residues Asn-292 and Arg-388 each coordinate substrate.

It belongs to the class-I pyridoxal-phosphate-dependent aminotransferase family. LL-diaminopimelate aminotransferase subfamily. As to quaternary structure, homodimer. The cofactor is pyridoxal 5'-phosphate.

It catalyses the reaction (2S,6S)-2,6-diaminopimelate + 2-oxoglutarate = (S)-2,3,4,5-tetrahydrodipicolinate + L-glutamate + H2O + H(+). It functions in the pathway amino-acid biosynthesis; L-lysine biosynthesis via DAP pathway; LL-2,6-diaminopimelate from (S)-tetrahydrodipicolinate (aminotransferase route): step 1/1. In terms of biological role, involved in the synthesis of meso-diaminopimelate (m-DAP or DL-DAP), required for both lysine and peptidoglycan biosynthesis. Catalyzes the direct conversion of tetrahydrodipicolinate to LL-diaminopimelate. In Prochlorococcus marinus (strain MIT 9211), this protein is LL-diaminopimelate aminotransferase.